Consider the following 123-residue polypeptide: Steroid Delta-isomerase (123 aa).

Tyr12 (proton donor) is an active-site residue. The Proton acceptor role is filled by Asp36. Asp96 provides a ligand contact to substrate.

In terms of assembly, homodimer.

The enzyme catalyses a 3-oxo-Delta(5)-steroid = a 3-oxo-Delta(4)-steroid. The polypeptide is Steroid Delta-isomerase (ksdI) (Nocardioides simplex (Arthrobacter simplex)).